Reading from the N-terminus, the 232-residue chain is DASH complex subunit DUO1 (232 aa).

Disordered regions lie at residues 1–44 (MADE…GGMR) and 133–232 (ERRR…RGAK). The stretch at 128-171 (ELEAEERRRQEEVERRAAEAERRREEARRKAEEEERRRAAAAAA) forms a coiled coil. Residues 133-165 (ERRRQEEVERRAAEAERRREEARRKAEEEERRR) show a composition bias toward basic and acidic residues. Composition is skewed to low complexity over residues 167-183 (AAAA…VGRG) and 191-213 (GSGL…TTSG).

This sequence belongs to the DASH complex DUO1 family. Component of the DASH complex consisting of ASK1, DAD1, DAD2, DAD3, DAD4, DAM1, DUO1, HSK3, SPC19 and SPC34, with a stoichiometry of one copy of each subunit per complex. Multiple DASH complexes oligomerize to form a ring that encircles spindle microtubules and organizes the rod-like NDC80 complexes of the outer kinetochore. DASH complex oligomerization strengthens microtubule attachments. On cytoplasmic microtubules, DASH complexes appear to form patches instead of rings.

The protein resides in the nucleus. It localises to the cytoplasm. The protein localises to the cytoskeleton. Its subcellular location is the spindle pole. It is found in the chromosome. The protein resides in the centromere. It localises to the kinetochore. Its function is as follows. Component of the DASH complex that connects microtubules with kinetochores and couples microtubule depolymerisation to chromosome movement; it is involved in retrieving kinetochores to the spindle poles before their re-orientation on the spindle in early mitosis and allows microtubule depolymerization to pull chromosomes apart and resist detachment during anaphase. Kinetochores, consisting of a centromere-associated inner segment and a microtubule-contacting outer segment, play a crucial role in chromosome segregation by mediating the physical connection between centromeric DNA and microtubules. Kinetochores also serve as an input point for the spindle assembly checkpoint, which delays anaphase until all chromosomes have bioriented on the mitotic spindle. This chain is DASH complex subunit DUO1, found in Chaetomium thermophilum (strain DSM 1495 / CBS 144.50 / IMI 039719) (Thermochaetoides thermophila).